Here is a 351-residue protein sequence, read N- to C-terminus: Glycerol-3-phosphate dehydrogenase 1-like protein (351 aa).

12–17 (GSGNWG) serves as a coordination point for NAD(+). Lys-122 contributes to the substrate binding site. Ala-155 provides a ligand contact to NAD(+). Catalysis depends on Lys-206, which acts as the Proton acceptor. NAD(+)-binding residues include Arg-271, Lys-298, and Gln-300. Position 271–272 (271–272 (RN)) interacts with substrate.

It belongs to the NAD-dependent glycerol-3-phosphate dehydrogenase family. As to quaternary structure, interacts with SCN5A.

Its subcellular location is the cytoplasm. It carries out the reaction sn-glycerol 3-phosphate + NAD(+) = dihydroxyacetone phosphate + NADH + H(+). Functionally, plays a role in regulating cardiac sodium current; decreased enzymatic activity with resulting increased levels of glycerol 3-phosphate activating the DPD1L-dependent SCN5A phosphorylation pathway, may ultimately lead to decreased sodium current; cardiac sodium current may also be reduced due to alterations of NAD(H) balance induced by DPD1L. The sequence is that of Glycerol-3-phosphate dehydrogenase 1-like protein (GPD1L) from Pongo abelii (Sumatran orangutan).